A 309-amino-acid chain; its full sequence is Protein phosphatase 1 regulatory subunit 42 (309 aa).

7 LRR repeats span residues 29-50 (KITH…SLCK), 51-72 (NLSV…NYAT), 73-94 (NLTH…RSLK), 95-116 (KLEK…EGLG), 117-138 (ELRE…LFDP), 147-168 (SLCI…ELLE), and 169-190 (NLNQ…EFLL). The 39-residue stretch at 204 to 242 (NPVCLKPKYRDRLILVSKSLEFLDGKEIKNIERQFLMNW) folds into the LRRCT domain.

In terms of assembly, interacts with PPP1CC isoform gamma-2; the interaction is direct. Interacts with actin, dynein, KIF5B, KIFC1 and tubulin. Associates with microtubules. In terms of processing, phosphorylated; in the testis.

The protein resides in the cytoplasm. It localises to the cytoskeleton. Its subcellular location is the microtubule organizing center. The protein localises to the centrosome. Regulates phosphatase activity of protein phosphatase 1 (PP1) complexes in the testis. The sequence is that of Protein phosphatase 1 regulatory subunit 42 from Homo sapiens (Human).